The primary structure comprises 1198 residues: Structural polyprotein (1198 aa).

The interval 2–15 is interaction with host EXOC1; the sequence is TKKPGGPGKNRAIN. The tract at residues 37–72 is hydrophobic; homodimerization of capsid protein C; it reads LLDGRGPVRFVLALITFFKFTALAPTKALLGRWKAV. Residues 106–127 constitute a propeptide, ER anchor for the capsid protein C, removed in mature form by serine protease NS3; sequence GGNEGSIMWLASLAVVIACAGA. A helical membrane pass occupies residues 110–130; sequence GSIMWLASLAVVIACAGAMKL. N-linked (GlcNAc...) asparagine; by host glycosylation occurs at Asn-142. Transmembrane regions (helical) follow at residues 254 to 274 and 280 to 294; these read WIIRNPGYAFLAAVLGWMLGS and VVFTILLLLVAPAYS. 6 disulfide bridges follow: Cys-297–Cys-324, Cys-354–Cys-410, Cys-354–Cys-415, Cys-368–Cys-399, Cys-386–Cys-410, and Cys-386–Cys-415. The tract at residues 392 to 405 is fusion peptide; it reads DRGWGNGCGLFGKG. An N-linked (GlcNAc...) asparagine; by host glycan is attached at Asn-448. 2 disulfides stabilise this stretch: Cys-484–Cys-581 and Cys-598–Cys-629. 2 helical membrane passes run 747–767 and 774–794; these read FGGMSWITQGLMGALLLWMGV and IALAFLATGGVLVFLATNVHA. Disulfide bonds link Cys-798/Cys-809, Cys-849/Cys-937, Cys-973/Cys-1017, Cys-1074/Cys-1123, Cys-1085/Cys-1106, and Cys-1107/Cys-1110. N-linked (GlcNAc...) asparagine; by host glycosylation is found at Asn-924 and Asn-1001. Residues 1151–1177 are disordered; sequence MVDPFSAGPSGDVSGHPGSPSQEVDGQ.

As to quaternary structure, homodimer. Interacts (via N-terminus) with host EXOC1 (via C-terminus); this interaction results in EXOC1 degradation through the proteasome degradation pathway. Interacts with host CAPRIN1; this interaction is involved in the suppression of the integrated stress response. Forms heterodimers with envelope protein E in the endoplasmic reticulum and Golgi. In terms of assembly, homodimer; in the endoplasmic reticulum and Golgi. Interacts with protein prM. Interacts with non-structural protein 1. In terms of processing, genome polyprotein: Specific enzymatic cleavages in vivo yield mature proteins. Cleavages in the lumen of endoplasmic reticulum are performed by host signal peptidase, whereas cleavages in the cytoplasmic side are performed by serine protease NS3. Signal cleavage at the 2K-4B site requires a prior NS3 protease-mediated cleavage at the 4A-2K site. Cleaved in post-Golgi vesicles by a host furin, releasing the mature small envelope protein M, and peptide pr. This cleavage is incomplete as up to 30% of viral particles still carry uncleaved prM. Post-translationally, N-glycosylated.

The protein resides in the secreted. It is found in the virion membrane. It localises to the host endoplasmic reticulum membrane. In terms of biological role, plays a role in virus budding by binding to the cell membrane and gathering the viral RNA into a nucleocapsid that forms the core of a mature virus particle. During virus entry, may induce genome penetration into the host cytoplasm after hemifusion induced by the surface proteins. Can migrate to the cell nucleus where it modulates host functions. Overcomes the anti-viral effects of host EXOC1 by sequestering and degrading the latter through the proteasome degradation pathway. Inhibits the integrated stress response (ISR) in the infected cell by binding to host CAPRIN1. Inhibits RNA silencing by interfering with host Dicer. Functionally, prevents premature fusion activity of envelope proteins in trans-Golgi by binding to envelope protein E at pH6.0. After virion release in extracellular space, gets dissociated from E dimers. Its function is as follows. Acts as a chaperone for envelope protein E during intracellular virion assembly by masking and inactivating envelope protein E fusion peptide. prM is the only viral peptide matured by host furin in the trans-Golgi network probably to avoid catastrophic activation of the viral fusion activity in acidic Golgi compartment prior to virion release. prM-E cleavage is inefficient, and many virions are only partially matured. These uncleaved prM would play a role in immune evasion. In terms of biological role, may play a role in virus budding. Exerts cytotoxic effects by activating a mitochondrial apoptotic pathway through M ectodomain. May display a viroporin activity. Binds to host cell surface receptor and mediates fusion between viral and cellular membranes. Envelope protein is synthesized in the endoplasmic reticulum in the form of heterodimer with protein prM. They play a role in virion budding in the ER, and the newly formed immature particle is covered with 60 spikes composed of heterodimer between precursor prM and envelope protein E. The virion is transported to the Golgi apparatus where the low pH causes dissociation of PrM-E heterodimers and formation of E homodimers. prM-E cleavage is inefficient, and many virions are only partially matured. These uncleaved prM would play a role in immune evasion. Functionally, may play a role in neuroinvasiveness. In Ardeidae (herons), this protein is Structural polyprotein.